The primary structure comprises 80 residues: RNA-binding protein Hfq (80 aa).

The 61-residue stretch at 7–67 (ESFLNTARKK…ITTIVPHERL (61 aa)) folds into the Sm domain.

The protein belongs to the Hfq family. As to quaternary structure, homohexamer.

RNA chaperone that binds small regulatory RNA (sRNAs) and mRNAs to facilitate mRNA translational regulation in response to envelope stress, environmental stress and changes in metabolite concentrations. Also binds with high specificity to tRNAs. The protein is RNA-binding protein Hfq of Aquifex aeolicus (strain VF5).